A 401-amino-acid polypeptide reads, in one-letter code: Lipoyl synthase 1, mitochondrial (401 aa).

The N-terminal 25 residues, 1-25 (MWSSSSSLCRNPSFRRAWLSTVTVT), are a transit peptide targeting the mitochondrion. The disordered stretch occupies residues 49-79 (IDDFSSTNAPTTTTHYTSSNGSPIVRQKAAP). Positions 51–70 (DFSSTNAPTTTTHYTSSNGS) are enriched in polar residues. Residues cysteine 117, cysteine 122, cysteine 128, cysteine 148, cysteine 152, cysteine 155, and serine 376 each contribute to the [4Fe-4S] cluster site. In terms of domain architecture, Radical SAM core spans 133-365 (EDQTATATIM…QETAMGMGFA (233 aa)).

It belongs to the radical SAM superfamily. Lipoyl synthase family. It depends on [4Fe-4S] cluster as a cofactor.

The protein localises to the mitochondrion. The catalysed reaction is [[Fe-S] cluster scaffold protein carrying a second [4Fe-4S](2+) cluster] + N(6)-octanoyl-L-lysyl-[protein] + 2 oxidized [2Fe-2S]-[ferredoxin] + 2 S-adenosyl-L-methionine + 4 H(+) = [[Fe-S] cluster scaffold protein] + N(6)-[(R)-dihydrolipoyl]-L-lysyl-[protein] + 4 Fe(3+) + 2 hydrogen sulfide + 2 5'-deoxyadenosine + 2 L-methionine + 2 reduced [2Fe-2S]-[ferredoxin]. It participates in protein modification; protein lipoylation via endogenous pathway; protein N(6)-(lipoyl)lysine from octanoyl-[acyl-carrier-protein]: step 2/2. In terms of biological role, catalyzes the radical-mediated insertion of two sulfur atoms into the C-6 and C-8 positions of the octanoyl moiety bound to the lipoyl domains of lipoate-dependent enzymes, thereby converting the octanoylated domains into lipoylated derivatives. The sequence is that of Lipoyl synthase 1, mitochondrial from Phaeodactylum tricornutum (strain CCAP 1055/1).